Consider the following 120-residue polypeptide: Chaperonin GroEL (120 aa).

Residue 23–27 (DGTTT) coordinates ATP.

Belongs to the chaperonin (HSP60) family. Forms a cylinder of 14 subunits composed of two heptameric rings stacked back-to-back. Interacts with the co-chaperonin GroES.

It localises to the cytoplasm. It carries out the reaction ATP + H2O + a folded polypeptide = ADP + phosphate + an unfolded polypeptide.. In terms of biological role, together with its co-chaperonin GroES, plays an essential role in assisting protein folding. The GroEL-GroES system forms a nano-cage that allows encapsulation of the non-native substrate proteins and provides a physical environment optimized to promote and accelerate protein folding. This chain is Chaperonin GroEL, found in Mycobacterium scrofulaceum.